We begin with the raw amino-acid sequence, 538 residues long: MAKLIAFDQDAREGILRGVDALANAVKVTLGPRGRNVVLDKAFGGPLVTNDGVTIARDIDLEDPFENLGAQLVKSVAVKTNDIAGDGTTTATLLAQALIAEGLRNVAAGANPMELNKGIAAAAEKTLEELKARATEVSDTKEIANVATVSSRDEVVGEIVAAAMEKVGKDGVVTVEESQSIETALEVTEGISFDKGYLSPYFINDNDTQQAVLDNPAVLLVRNKISSLPDFLPLLEKVVESNRPLLIIAEDVEGEPLQTLVVNSIRKTIKVVAVKSPYFGDRRKAFMDDLAIVTKATVVDPEVGINLNEAGEEVFGTARRITVSKDETVIVDGAGSAEEVEARRAQIRREIANTDSTWDREKAEERLAKLSGGIAVIRVGAATETEVNDRKLRVEDAINAARAAAQEGVIAGGGSALVQIAETLKAYAEEFEGDQKVGVRALATALGKPAYWIASNAGLDGSVVVARTAALPNGEGFNAATLEYGNLINDGVIDPVKVTHSAVVNATSVARMVLTTEASVVEKPAEEAADAHAGHHHH.

ATP is bound by residues 29-32, 86-90, G413, 478-480, and D494; these read TLGP, DGTTT, and NAA.

It belongs to the chaperonin (HSP60) family. In terms of assembly, forms a cylinder of 14 subunits composed of two heptameric rings stacked back-to-back. Interacts with the co-chaperonin GroES.

It is found in the cytoplasm. It catalyses the reaction ATP + H2O + a folded polypeptide = ADP + phosphate + an unfolded polypeptide.. Together with its co-chaperonin GroES, plays an essential role in assisting protein folding. The GroEL-GroES system forms a nano-cage that allows encapsulation of the non-native substrate proteins and provides a physical environment optimized to promote and accelerate protein folding. This Corynebacterium glutamicum (strain R) protein is Chaperonin GroEL 1.